Reading from the N-terminus, the 327-residue chain is ATP-dependent 6-phosphofructokinase (327 aa).

G12 contacts ATP. ADP is bound by residues 22–26 (RGVVR) and 55–60 (RYSVSD). ATP-binding positions include 73-74 (RF) and 103-106 (GDGS). D104 serves as a coordination point for Mg(2+). 127–129 (TID) is a substrate binding site. Residue D129 is the Proton acceptor of the active site. R156 provides a ligand contact to ADP. Residues R164 and 171–173 (MGR) contribute to the substrate site. ADP contacts are provided by residues 187-189 (GCE), K213, and 215-217 (KKH). Substrate is bound by residues E224, R245, and 251–254 (HIQR).

Belongs to the phosphofructokinase type A (PFKA) family. ATP-dependent PFK group I subfamily. Prokaryotic clade 'B1' sub-subfamily. As to quaternary structure, homotetramer. It depends on Mg(2+) as a cofactor.

It is found in the cytoplasm. The enzyme catalyses beta-D-fructose 6-phosphate + ATP = beta-D-fructose 1,6-bisphosphate + ADP + H(+). It participates in carbohydrate degradation; glycolysis; D-glyceraldehyde 3-phosphate and glycerone phosphate from D-glucose: step 3/4. With respect to regulation, allosterically activated by ADP and other diphosphonucleosides, and allosterically inhibited by phosphoenolpyruvate. Catalyzes the phosphorylation of D-fructose 6-phosphate to fructose 1,6-bisphosphate by ATP, the first committing step of glycolysis. This chain is ATP-dependent 6-phosphofructokinase, found in Yersinia pseudotuberculosis serotype O:1b (strain IP 31758).